Here is a 25-residue protein sequence, read N- to C-terminus: Bacteriocin mutacin F-59.1 (25 aa).

A disulfide bridge connects residues Cys9 and Xaa14.

It localises to the secreted. In terms of biological role, bactericidal activity against a wide range of pathogenic bacteria, including Bacillus spp., Enterococcus spp., Listeria spp., Staphylococcus spp. and Streptococcus spp. Has no activity against Lactobacillus salivarius, Staphylococcus aureus, Streptococcus pyogenes and Streptococcus suis. The sequence is that of Bacteriocin mutacin F-59.1 from Streptococcus mutans.